Here is a 376-residue protein sequence, read N- to C-terminus: Germination-specific cysteine protease 1 (376 aa).

A signal peptide spans 1-22 (MAPSTKVLSLLLLYVVVSLASG). A propeptide spans 23 to 144 (DESIINDHLQ…KYSAAVNGKE (122 aa)) (activation peptide). N-linked (GlcNAc...) asparagine glycosylation is present at N93. Disulfide bonds link C166–C208, C200–C241, and C299–C351. C169 is an active-site residue. Residues H305 and N325 contribute to the active site.

The protein belongs to the peptidase C1 family.

In terms of biological role, probable thiol protease. The chain is Germination-specific cysteine protease 1 from Arabidopsis thaliana (Mouse-ear cress).